We begin with the raw amino-acid sequence, 217 residues long: Large ribosomal subunit protein uL1 (217 aa).

Belongs to the universal ribosomal protein uL1 family. In terms of assembly, component of the large ribosomal subunit.

It is found in the cytoplasm. Component of the large ribosomal subunit. The ribosome is a large ribonucleoprotein complex responsible for the synthesis of proteins in the cell. In Xenopus laevis (African clawed frog), this protein is Large ribosomal subunit protein uL1 (rpl10a).